Here is a 310-residue protein sequence, read N- to C-terminus: Homoserine kinase (310 aa).

91 to 101 (PIGSGLGSSAC) provides a ligand contact to ATP.

Belongs to the GHMP kinase family. Homoserine kinase subfamily.

The protein localises to the cytoplasm. It carries out the reaction L-homoserine + ATP = O-phospho-L-homoserine + ADP + H(+). It functions in the pathway amino-acid biosynthesis; L-threonine biosynthesis; L-threonine from L-aspartate: step 4/5. Its function is as follows. Catalyzes the ATP-dependent phosphorylation of L-homoserine to L-homoserine phosphate. The sequence is that of Homoserine kinase from Shigella sonnei (strain Ss046).